We begin with the raw amino-acid sequence, 300 residues long: MKIGHQFHTVALVGRSNTPGIAEPLASLAACIAKRGFEVVFEADTAQAIGSAGYPALTPAEIGARADVAVVLGGDGTMLGMGRQLAPYKTPLIGINHGRLGFITDIPASDMREVVPMMLAGSYEREERTLLEARIVRNGEPIYHALAFNDVVVNRSGFSGMAELRVSVDGRFMYNQRSDGLIVATPTGSTAYALSSQGPILHPQLQGIVLVPIAPHALSNRPIVLPDDSKIAIQIIGGRDVNVNFDMQSFTALELNDTIEVRRSKHTVPFLHPVGYSYYATLRKKLHWNEHPSSEEDDDA.

D75 (proton acceptor) is an active-site residue. NAD(+) is bound by residues 75-76 (DG), 149-150 (ND), R177, D179, 190-195 (TAYALS), A214, and Q248.

Belongs to the NAD kinase family. Requires a divalent metal cation as cofactor.

It is found in the cytoplasm. The enzyme catalyses NAD(+) + ATP = ADP + NADP(+) + H(+). Functionally, involved in the regulation of the intracellular balance of NAD and NADP, and is a key enzyme in the biosynthesis of NADP. Catalyzes specifically the phosphorylation on 2'-hydroxyl of the adenosine moiety of NAD to yield NADP. This Burkholderia pseudomallei (strain K96243) protein is NAD kinase.